We begin with the raw amino-acid sequence, 267 residues long: Acetyl-coenzyme A carboxylase carboxyl transferase subunit beta 1 (267 aa).

Residues 9–267 enclose the CoA carboxyltransferase N-terminal domain; sequence TWQACPKCGR…NYGIGRSAHG (259 aa). Positions 13, 16, 31, and 34 each coordinate Zn(2+). The segment at 13–34 adopts a C4-type zinc-finger fold; sequence CPKCGRHVHQRQWGTYQQCPYC.

This sequence belongs to the AccD/PCCB family. As to quaternary structure, acetyl-CoA carboxylase is a heterohexamer composed of biotin carboxyl carrier protein (AccB), biotin carboxylase (AccC) and two subunits each of ACCase subunit alpha (AccA) and ACCase subunit beta (AccD). It depends on Zn(2+) as a cofactor.

The protein localises to the cytoplasm. It catalyses the reaction N(6)-carboxybiotinyl-L-lysyl-[protein] + acetyl-CoA = N(6)-biotinyl-L-lysyl-[protein] + malonyl-CoA. It functions in the pathway lipid metabolism; malonyl-CoA biosynthesis; malonyl-CoA from acetyl-CoA: step 1/1. Functionally, component of the acetyl coenzyme A carboxylase (ACC) complex. Biotin carboxylase (BC) catalyzes the carboxylation of biotin on its carrier protein (BCCP) and then the CO(2) group is transferred by the transcarboxylase to acetyl-CoA to form malonyl-CoA. The sequence is that of Acetyl-coenzyme A carboxylase carboxyl transferase subunit beta 1 from Lactiplantibacillus plantarum (strain ATCC BAA-793 / NCIMB 8826 / WCFS1) (Lactobacillus plantarum).